The following is a 443-amino-acid chain: Enolase (443 aa).

Q167 contributes to the (2R)-2-phosphoglycerate binding site. The active-site Proton donor is E209. Residues D246, E291, and D318 each coordinate Mg(2+). Residues K343, R372, S373, and K394 each contribute to the (2R)-2-phosphoglycerate site. K343 serves as the catalytic Proton acceptor.

The protein belongs to the enolase family. As to quaternary structure, component of the RNA degradosome, a multiprotein complex involved in RNA processing and mRNA degradation. Mg(2+) is required as a cofactor.

It localises to the cytoplasm. The protein localises to the secreted. It is found in the cell surface. The enzyme catalyses (2R)-2-phosphoglycerate = phosphoenolpyruvate + H2O. Its pathway is carbohydrate degradation; glycolysis; pyruvate from D-glyceraldehyde 3-phosphate: step 4/5. Its function is as follows. Catalyzes the reversible conversion of 2-phosphoglycerate (2-PG) into phosphoenolpyruvate (PEP). It is essential for the degradation of carbohydrates via glycolysis. The chain is Enolase from Wigglesworthia glossinidia brevipalpis.